A 494-amino-acid chain; its full sequence is Cytochrome P450 2A10 (494 aa).

At Lys-379 the chain carries N6-acetyllysine. A heme-binding site is contributed by Cys-439.

This sequence belongs to the cytochrome P450 family. Heme serves as cofactor. Expressed in liver and lung as well as in nasal tissues.

It localises to the endoplasmic reticulum membrane. Its subcellular location is the microsome membrane. The enzyme catalyses an organic molecule + reduced [NADPH--hemoprotein reductase] + O2 = an alcohol + oxidized [NADPH--hemoprotein reductase] + H2O + H(+). In terms of biological role, catalyzes the oxygenation of a variety of substrates, including ethanol and procarcinogens such as N-nitrosodiethylamine and phenacetin. Exhibits a high coumarin 7-hydroxylase activity. Converts also testosterone to androstenedione. The polypeptide is Cytochrome P450 2A10 (CYP2A10) (Oryctolagus cuniculus (Rabbit)).